A 583-amino-acid chain; its full sequence is Aspartate--tRNA ligase (583 aa).

Residue E174 coordinates L-aspartate. The aspartate stretch occupies residues 198 to 201 (QITK). R220 contacts L-aspartate. Residues 220–222 (RDE) and Q229 contribute to the ATP site. Residue H443 coordinates L-aspartate. ATP is bound at residue E477. R484 is an L-aspartate binding site. Residue 529 to 532 (GLDR) coordinates ATP.

Belongs to the class-II aminoacyl-tRNA synthetase family. Type 1 subfamily. As to quaternary structure, homodimer.

It is found in the cytoplasm. The catalysed reaction is tRNA(Asp) + L-aspartate + ATP = L-aspartyl-tRNA(Asp) + AMP + diphosphate. Functionally, catalyzes the attachment of L-aspartate to tRNA(Asp) in a two-step reaction: L-aspartate is first activated by ATP to form Asp-AMP and then transferred to the acceptor end of tRNA(Asp). The sequence is that of Aspartate--tRNA ligase from Streptococcus agalactiae serotype III (strain NEM316).